The chain runs to 485 residues: Tektin-5 (485 aa).

Coiled coils occupy residues 114-185 (RLTD…EVNC), 225-247 (QEQM…DAQH), 307-385 (QNMR…MAKE), and 421-444 (TIDD…QLLV).

It belongs to the tektin family. Microtubule inner protein component of sperm flagellar doublet microtubules. Interacts with TEKT3. Post-translationally, ubiquitinated, leading to its degradation. Deubiquitinated by USP16, promoting its stability.

It is found in the cytoplasm. The protein localises to the cytoskeleton. Its subcellular location is the flagellum axoneme. In terms of biological role, sperm-specific microtubule inner protein (MIP) part of the dynein-decorated doublet microtubules (DMTs) in flagellar axoneme. Forms an extensive interaction network in different conformations that reinforces the helix bundle composed by other tektin proteins (TEKT1 to TEKT4) and MIPs to anchor the tektin bundle onto the tubulin wall of A-tubule of the sperm flagellum. In Homo sapiens (Human), this protein is Tektin-5 (TEKT5).